A 275-amino-acid chain; its full sequence is Undecaprenyl-diphosphatase (275 aa).

The next 8 helical transmembrane spans lie at Leu-2–Ile-22, Phe-43–Tyr-63, Trp-83–Leu-103, Met-111–Leu-131, Val-161–Ile-181, Tyr-186–Leu-206, Ile-225–Leu-245, and Pro-255–Ala-275.

Belongs to the UppP family.

It localises to the cell membrane. The catalysed reaction is di-trans,octa-cis-undecaprenyl diphosphate + H2O = di-trans,octa-cis-undecaprenyl phosphate + phosphate + H(+). Catalyzes the dephosphorylation of undecaprenyl diphosphate (UPP). Confers resistance to bacitracin. The chain is Undecaprenyl-diphosphatase from Lactobacillus delbrueckii subsp. bulgaricus (strain ATCC 11842 / DSM 20081 / BCRC 10696 / JCM 1002 / NBRC 13953 / NCIMB 11778 / NCTC 12712 / WDCM 00102 / Lb 14).